Consider the following 359-residue polypeptide: Insulin gene enhancer protein ISL-2 (359 aa).

LIM zinc-binding domains follow at residues 25–86 and 87–149; these read AMCV…RLFG and IKCA…LLER. The interval 151-190 is disordered; that stretch reads AAGSPRSPGPLPGARGLHLPDAGSGRQPSLRTHVHKQAEK. A phosphoserine mark is found at serine 154 and serine 157. Positions 191 to 250 form a DNA-binding region, homeobox; the sequence is TTRVRTVLNEKQLHTLRTCYAANPRPDALMKEQLVEMTGLSPRVIRVWFQNKRCKDKKKS. The tract at residues 272–301 is LIM-binding domain (LID); sequence GTPLVAGSPIRHENAVQGSAVEVQTYQPPW. A Phosphoserine modification is found at serine 279. Residues 326-336 show a composition bias toward low complexity; the sequence is ESGSLGNSSGS. The disordered stretch occupies residues 326 to 359; that stretch reads ESGSLGNSSGSDVTSLSSQLPDTPNSMVPSPVET. Residues 337–359 are compositionally biased toward polar residues; sequence DVTSLSSQLPDTPNSMVPSPVET.

Interacts with LHX4.

The protein localises to the nucleus. Transcriptional factor that defines subclasses of motoneurons that segregate into columns in the spinal cord and select distinct axon pathways. This is Insulin gene enhancer protein ISL-2 (Isl2) from Mus musculus (Mouse).